A 1001-amino-acid polypeptide reads, in one-letter code: TonB-dependent receptor P3 (1001 aa).

Positions 1 to 26 are cleaved as a signal peptide; sequence MTTKNNKQLKSVLFMFLLLIGAYVKA. The TonB box signature appears at 109–116; sequence EEIVVIGY. Positions 120–232 constitute a TBDR plug domain; it reads KKSDVSGSVS…ANGVIMVTTK (113 aa). A TBDR beta-barrel domain is found at 238–1001; the sequence is KPTLELNTSY…TFTMGLNMKF (764 aa). The short motif at 984–1001 is the TonB C-terminal box element; it reads YGSYPNVRTFTMGLNMKF.

It belongs to the TonB-dependent receptor family.

It is found in the cell outer membrane. Functionally, tonB-dependent receptor probably involved in ulvan degradation. Ulvan is the main polysaccharide component of the Ulvales (green seaweed) cell wall. It is composed of disaccharide building blocks comprising 3-sulfated rhamnose (Rha3S) linked to D-glucuronic acid (GlcA), L-iduronic acid (IduA), or D-xylose (Xyl). The TonB-dependent receptor may mediate transport of ulvan oligosaccharides from the surface of the outer membrane to the periplasm for subsequent degradation. The polypeptide is TonB-dependent receptor P3 (Formosa agariphila (strain DSM 15362 / KCTC 12365 / LMG 23005 / KMM 3901 / M-2Alg 35-1)).